The sequence spans 216 residues: MAIGIVGRKRGMTRVFTEEGGSIPVTVVEADPNRVTQVKTEESDGYRAVQVTAGRRKPQRVRKPEAGHFARAGVEAGRGVWEFRLDKGQRASDEEMPETGGSIDVGGFEAGQKVDVTGTTKGRGFAGTVRRHNFRAQRNTHGNSKSHRVPGSIGQCQSPGRVFKGKKMAGQMGNRRATIQNLEVVRVDSERNLLLIRGAVPGAVGSDLIVRPASKA.

Disordered stretches follow at residues 89-108 (QRASDEEMPETGGSIDVGGF) and 139-158 (NTHGNSKSHRVPGSIGQCQS). Q157 carries the N5-methylglutamine modification.

The protein belongs to the universal ribosomal protein uL3 family. In terms of assembly, part of the 50S ribosomal subunit. Forms a cluster with proteins L14 and L19. In terms of processing, methylated by PrmB.

Functionally, one of the primary rRNA binding proteins, it binds directly near the 3'-end of the 23S rRNA, where it nucleates assembly of the 50S subunit. This chain is Large ribosomal subunit protein uL3, found in Halorhodospira halophila (strain DSM 244 / SL1) (Ectothiorhodospira halophila (strain DSM 244 / SL1)).